Reading from the N-terminus, the 155-residue chain is Putative ATP synthase protein YMF19-like protein (155 aa).

Transmembrane regions (helical) follow at residues 23 to 43, 89 to 109, and 117 to 137; these read FLWL…VLVF, WRAL…LGSF, and VDFG…LFFF.

The protein belongs to the ATPase protein YMF19 family.

The protein localises to the mitochondrion membrane. The chain is Putative ATP synthase protein YMF19-like protein (YMF18) from Marchantia polymorpha (Common liverwort).